Here is a 155-residue protein sequence, read N- to C-terminus: Peptide methionine sulfoxide reductase MsrB (155 aa).

The region spanning 15 to 137 (REALIATLNA…NSVSLTFIPT (123 aa)) is the MsrB domain. 4 residues coordinate Zn(2+): Cys-54, Cys-57, Cys-103, and Cys-106. Residue Cys-126 is the Nucleophile of the active site.

This sequence belongs to the MsrB Met sulfoxide reductase family. Zn(2+) serves as cofactor.

It carries out the reaction L-methionyl-[protein] + [thioredoxin]-disulfide + H2O = L-methionyl-(R)-S-oxide-[protein] + [thioredoxin]-dithiol. This is Peptide methionine sulfoxide reductase MsrB from Xylella fastidiosa (strain 9a5c).